The primary structure comprises 425 residues: Protein CLP1 homolog (425 aa).

ATP contacts are provided by residues glutamate 18, lysine 59, and 121–126 (DVGKST).

Belongs to the Clp1 family. Clp1 subfamily.

Its subcellular location is the nucleus. In terms of biological role, required for endonucleolytic cleavage during polyadenylation-dependent pre-mRNA 3'-end formation. This chain is Protein CLP1 homolog (cbc), found in Drosophila pseudoobscura pseudoobscura (Fruit fly).